The primary structure comprises 1483 residues: MSNTPYNSSVPSIASMTQSSVSRSPNMHTATTPGANTSSNSPPLHMSSDSSKIKRKRNRIPLSCTICRKRKVKCDKLRPHCQQCTKTGVAHLCHYMEQTWAEEAEKELLKDNELKKLRERVKSLEKTLSKVHSSPSSNSLKSYNIPESSNLFMGSDEHTTLVNANTGSASSASHMHQQQQQQQQQEQQQDFSRSANANANSSSLSISNKYDNDELDLTKDFDLLHIKSNGTIHLGATHWLSIMKGDPYLKLLWGHIFAMREKLNEWYYQKNSYSKLKSSKCPINHAQAPPSAAAAATRKCPVDHSAFSSGMVAPKEETPLPRKCPVDHTMFSSGMIPPREDTSSQKRCPVDHTMYSAGMMPPKDETPSPFSTKAMIDHNKHTMNPPQSKCPVDHRNYMKDYPSDMANSSSNPASRCPIDHSSMKNTAALPASTHNTIPHHQPQSGSHARSHPAQNRKHDSYMTESEVLATLCEMLPPKRVIALFIEKFFKHLYPAIPILDEQNFKNHMNQMLSLSSMNPTVNNFGMSMPSSSTLENQPITQINLPKLSDSCNLGILIIILRLTWLSIPSNSCEVDLGEESGSFLVPNESSNMSASALTSMAKEESLLLKHETPVEALELCQKYLIKFDELSSISNNNVNLTTVQFAIFYNFYMKSASNDLTTLTNTNNTGMANPGHDSESHQILLSNITQMAFSCGLHRDPDNFPQLNATIPATSQDVSNNGSKKANPSTNPTLNNNMSAATTNSSSRSGSADSRSGSNPVNKKENQVSIERFKHTWRKIWYYIVSMDVNQSLSLGSPRLLRNLRDFSDTKLPSASRIDYVRDIKELIIVKNFTLFFQIDLCIIAVLNHILNVSLARSVRKFELDSLINLLKNLTYGTENVNDVVSSLINKGLLPTSEGGSVDSNNDEIYGLPKLPDILNHGQHNQNLYADGRNTSSSDIDKKLDLPHESTTRALFFSKHMTIRMLLYLLNYILFTHYEPMGSEDPGTNILAKEYAQEALNFAMDGYRNCMIFFNNIRNTNSLFDYMNVILSYPCLDIGHRSLQFIVCLILRAKCGPLTGMRESSIITNGTSSGFNSSVEDEDVKVKQESSDELKKDDFMKDVNLDSGDSLAEILMSRMLLFQKLTKQLSKKYNYAIRMNKSTGFFVSLLDTPSKKSDSKSGGSSFMLGNWKHPKVSNMSGFLAGDKDQLQKCPVYQDALGFVSPTGANEGSAPMQGMSLQGSTARMGGTQLPPIRSYKPITYTSSNLRRMNETGEAEAKRRRFNDGYIDNNSNNDIPRGISPKPSNGLSSVQPLLSSFSMNQLNGGTIPTVPSLTNITSQMGALPSLDRITTNQINLPDPSRDEAFDNSIKQMTPMTSAFMNANTTIPSSTLNGNMNMNGAGTANTDTSANGSALSTLTSPQGSDLASNSATQYKPDLEDFLMQNSNFNGLMINPSSLVEVVGGYNDPNNLGRNDAVDFLPVDNVEIDGLVDFYRADFPIWE.

The segment covering 1–50 (MSNTPYNSSVPSIASMTQSSVSRSPNMHTATTPGANTSSNSPPLHMSSDS) has biased composition (polar residues). The tract at residues 1–56 (MSNTPYNSSVPSIASMTQSSVSRSPNMHTATTPGANTSSNSPPLHMSSDSSKIKRK) is disordered. Residues Cys64, Cys67, Cys74, Cys81, Cys84, and Cys93 each coordinate Zn(2+). The zn(2)-C6 fungal-type DNA-binding region spans 64–93 (CTICRKRKVKCDKLRPHCQQCTKTGVAHLC). The stretch at 105–134 (EKELLKDNELKKLRERVKSLEKTLSKVHSS) forms a coiled coil. Over residues 162-176 (VNANTGSASSASHMH) the composition is skewed to polar residues. The tract at residues 162-208 (VNANTGSASSASHMHQQQQQQQQQEQQQDFSRSANANANSSSLSISN) is disordered. The span at 177–208 (QQQQQQQQQEQQQDFSRSANANANSSSLSISN) shows a compositional bias: low complexity. A heme-responsive; required for HMC formation region spans residues 244-444 (KGDPYLKLLW…NTIPHHQPQS (201 aa)). HRM repeat units follow at residues 280–285 (KCPINH), 299–304 (KCPVDH), 323–328 (KCPVDH), 347–352 (RCPVDH), 389–394 (KCPVDH), and 415–420 (RCPIDH). 2 stretches are compositionally biased toward polar residues: residues 432–447 (STHNTIPHHQPQSGSH) and 706–734 (QLNATIPATSQDVSNNGSKKANPSTNPTL). Disordered stretches follow at residues 432 to 458 (STHNTIPHHQPQSGSHARSHPAQNRKH) and 706 to 767 (QLNA…KENQ). Residues 735 to 759 (NNNMSAATTNSSSRSGSADSRSGSN) are compositionally biased toward low complexity. An HRM 7 repeat occupies 1192–1197 (KCPVYQ). A disordered region spans residues 1384 to 1411 (TANTDTSANGSALSTLTSPQGSDLASNS). The segment covering 1388–1411 (DTSANGSALSTLTSPQGSDLASNS) has biased composition (polar residues).

Binds DNA as a homodimer. Interacts with SRO9 and YDJ1. In the absence of heme, binds to at least four cellular proteins, including YDJ1 and SRO9, forming a high-molecular-weight complex (HMC) which results in repression of its activity and dictates its DNA-binding specificity.

It localises to the nucleus. Regulation of oxygen dependent gene expression. It modulates the expression of Iso-1 (CYP1) and Iso-2 (CYP3) cytochrome c. In response to heme, promotes transcription of genes encoding functions required for respiration, controlling oxidative damage and repression of anaerobic genes. Binds to the sequence 5'-CGGNNNTNNCGG-3'. The sequence is that of Heme-responsive zinc finger transcription factor HAP1 (HAP1) from Saccharomyces cerevisiae (strain RM11-1a) (Baker's yeast).